The chain runs to 217 residues: Insulin-like growth factor 2.L (217 aa).

The first 56 residues, 1-56 (MEQLSCKHRSSSMEAEAQLCRQTESRSTQLPRMSVMRHLFLLSITFLVYTLDSAKA), serve as a signal peptide directing secretion. A b region spans residues 57-83 (YRPTETLCGGELVDTLQFVCGDRGFYF). 3 disulfides stabilise this stretch: Cys-64–Cys-103, Cys-76–Cys-116, and Cys-102–Cys-107. The c stretch occupies residues 84-96 (STNNGRSNRRSNR). The interval 97–117 (GIVEECCFRSCDLELLETYCA) is a. Residues 118–123 (KPSKNE) form a d region. The propeptide at 124–217 (RDVSTAPATA…LQQTSEPSHN (94 aa)) is e peptide.

This sequence belongs to the insulin family.

It localises to the secreted. Its function is as follows. The insulin-like growth factors, isolated from plasma, are structurally and functionally related to insulin but have a much higher growth-promoting activity. Promotes anterior neural development. Acts as a ligand for integrin which is required for IGF2 signaling. In Xenopus laevis (African clawed frog), this protein is Insulin-like growth factor 2.L.